The sequence spans 287 residues: Probable endonuclease 4 (287 aa).

9 residues coordinate Zn(2+): histidine 69, histidine 109, glutamate 144, aspartate 178, histidine 181, histidine 215, aspartate 228, histidine 230, and glutamate 260.

The protein belongs to the AP endonuclease 2 family. Zn(2+) serves as cofactor.

The enzyme catalyses Endonucleolytic cleavage to 5'-phosphooligonucleotide end-products.. In terms of biological role, endonuclease IV plays a role in DNA repair. It cleaves phosphodiester bonds at apurinic or apyrimidinic (AP) sites, generating a 3'-hydroxyl group and a 5'-terminal sugar phosphate. This is Probable endonuclease 4 from Thermotoga sp. (strain RQ2).